Consider the following 449-residue polypeptide: Glutamyl-tRNA reductase (449 aa).

Substrate is bound by residues 48–51, Ser-99, 104–106, and Gln-110; these read TCNR and EDQ. Cys-49 (nucleophile) is an active-site residue. 179–184 lines the NADP(+) pocket; that stretch reads GAGEIG.

Belongs to the glutamyl-tRNA reductase family. As to quaternary structure, homodimer.

It catalyses the reaction (S)-4-amino-5-oxopentanoate + tRNA(Glu) + NADP(+) = L-glutamyl-tRNA(Glu) + NADPH + H(+). Its pathway is porphyrin-containing compound metabolism; protoporphyrin-IX biosynthesis; 5-aminolevulinate from L-glutamyl-tRNA(Glu): step 1/2. Catalyzes the NADPH-dependent reduction of glutamyl-tRNA(Glu) to glutamate 1-semialdehyde (GSA). The polypeptide is Glutamyl-tRNA reductase (Methanosarcina barkeri (strain Fusaro / DSM 804)).